A 65-amino-acid polypeptide reads, in one-letter code: Alpha-insect toxin BotIT1 (65 aa).

The LCN-type CS-alpha/beta domain maps to 2-64 (RDAYIAQNYN…VPIRIPGKCH (63 aa)). Intrachain disulfides connect Cys12–Cys63, Cys16–Cys36, Cys22–Cys46, and Cys26–Cys48.

It belongs to the long (4 C-C) scorpion toxin superfamily. Sodium channel inhibitor family. Alpha subfamily. Expressed by the venom gland.

The protein localises to the secreted. In terms of biological role, alpha toxins bind voltage-independently at site-3 of sodium channels (Nav) and inhibit the inactivation of the activated channels, thereby blocking neuronal transmission. This contractive toxin is highly toxic to insects and barely toxic to mammals. In Buthus occitanus tunetanus (Common European scorpion), this protein is Alpha-insect toxin BotIT1.